The sequence spans 296 residues: Phosphatidylglycerol--prolipoprotein diacylglyceryl transferase (296 aa).

The next 7 helical transmembrane spans lie at 17–37 (LAVRWYGLMYLVGFIAAIVVG), 59–79 (MMFYGVLGTVLGGRLGYVLFY), 97–117 (GGMSFHGGFLGVTLAMMLFAW), 129–149 (FVAPMVPLGLAAGRLGNFING), 204–224 (SQLYEIALEGIALFFVLFLFA), 230–250 (MGAISALFLIGYGLARFTVEF), and 257–277 (FLGLLALGLSMGQWLSLPMIL). Arg142 is an a 1,2-diacyl-sn-glycero-3-phospho-(1'-sn-glycerol) binding site.

It belongs to the Lgt family.

It localises to the cell inner membrane. The enzyme catalyses L-cysteinyl-[prolipoprotein] + a 1,2-diacyl-sn-glycero-3-phospho-(1'-sn-glycerol) = an S-1,2-diacyl-sn-glyceryl-L-cysteinyl-[prolipoprotein] + sn-glycerol 1-phosphate + H(+). It participates in protein modification; lipoprotein biosynthesis (diacylglyceryl transfer). Its function is as follows. Catalyzes the transfer of the diacylglyceryl group from phosphatidylglycerol to the sulfhydryl group of the N-terminal cysteine of a prolipoprotein, the first step in the formation of mature lipoproteins. This Burkholderia cenocepacia (strain HI2424) protein is Phosphatidylglycerol--prolipoprotein diacylglyceryl transferase.